A 1174-amino-acid polypeptide reads, in one-letter code: Tight junction protein 2 (1174 aa).

The 88-residue stretch at threonine 10 to arginine 97 folds into the PDZ 1 domain. Serine 107, serine 127, serine 130, serine 140, serine 145, serine 147, serine 151, serine 173, serine 195, and serine 217 each carry phosphoserine. The span at glycine 125 to arginine 137 shows a compositional bias: basic and acidic residues. Positions glycine 125 to isoleucine 290 are disordered. The span at arginine 146–histidine 214 shows a compositional bias: basic and acidic residues. Basic and acidic residues predominate over residues arginine 220 to aspartate 235. The residue at position 239 (serine 239) is a Phosphoserine. 2 stretches are compositionally biased toward basic and acidic residues: residues glutamate 243 to arginine 266 and leucine 274 to arginine 288. The PDZ 2 domain occupies glycine 291–serine 369. Phosphoserine occurs at positions 309, 382, 384, 390, 399, 408, 414, and 415. The interval glutamate 391 to glutamine 430 is disordered. Basic and acidic residues predominate over residues serine 399–glutamine 430. Phosphothreonine is present on threonine 439. Residues glutamate 456 to tyrosine 490 are disordered. Serine 483 is modified (phosphoserine). Residues asparagine 493–serine 574 enclose the PDZ 3 domain. Position 558 is a phosphotyrosine (tyrosine 558). An SH3 domain is found at glycine 588–alanine 653. In terms of domain architecture, Guanylate kinase-like spans methionine 679 to glutamine 860. Serine 686 and serine 886 each carry phosphoserine. Threonine 889 is subject to Phosphothreonine. 2 positions are modified to phosphoserine: serine 897 and serine 904. Disordered stretches follow at residues serine 904–lysine 1065 and aspartate 1100–leucine 1174. A phosphothreonine mark is found at threonine 909 and threonine 917. The segment covering valine 940–proline 951 has biased composition (basic and acidic residues). Phosphoserine is present on residues serine 950, serine 962, serine 970, serine 990, and serine 1052. Positions glutamate 978–lysine 1000 are enriched in basic and acidic residues. Acidic residues predominate over residues glutamate 1044–glutamate 1056. Tyrosine 1102 bears the Phosphotyrosine mark. Serine 1131 and serine 1143 each carry phosphoserine. A compositionally biased stretch (basic and acidic residues) spans tyrosine 1150–lysine 1159. Residues threonine 1172–leucine 1174 form an interaction with SCRIB region.

The protein belongs to the MAGUK family. In terms of assembly, homodimer. Interacts (via PDZ2 domain) with TJP1/ZO1 (via PDZ2 domain). Interacts with UBN1. Interacts with SCRIB. Interacts with OCLN. Interacts with SAFB in the nucleus. Interacts with USP53 (via the C-terminal region). Interacts with claudins, including CLDN1, CLDN2, CLDN3, CLDN5 and CLDN7. Interacts with CLDN18. Interacts (via N-terminus) with CTNNA1. Post-translationally, phosphorylated.

The protein resides in the cell junction. Its subcellular location is the adherens junction. It localises to the cell membrane. The protein localises to the nucleus. It is found in the tight junction. Its function is as follows. Plays a role in tight junctions and adherens junctions. Acts as a positive regulator of RANKL-induced osteoclast differentiation, potentially via mediating downstream transcriptional activity. In Canis lupus familiaris (Dog), this protein is Tight junction protein 2.